We begin with the raw amino-acid sequence, 375 residues long: Oleosin-B6 (375 aa).

A polar region spans residues 1–32; the sequence is MKEEIQNETAQTQLQREGRMFSFLFPVIEVIK. A run of 3 helical transmembrane segments spans residues 21 to 43, 55 to 75, and 81 to 101; these read FSFL…SVVF, AVAL…LVPA, and LLAT…GLLM. The segment at 33 to 112 is hydrophobic; sequence VVMASVASVV…LIKHPGKEGA (80 aa). 2 disordered regions span residues 144 to 284 and 303 to 375; these read PGVG…SFLS and IPGF…DESS. Positions 148-179 are enriched in basic and acidic residues; it reads KKSEGRGESKGKKGKKGKSEHGRGKHEGEGKS. The span at 193 to 210 shows a compositional bias: pro residues; sequence NNPPPAGAPPTGSPPAAP. 23 tandem repeats follow at residues 207–209, 210–212, 213–215, 216–218, 219–221, 222–224, 225–227, 228–230, 231–233, 234–236, 237–239, 240–242, 243–245, 246–248, 249–251, 252–254, 255–257, 258–260, 261–263, 264–266, 267–269, 270–272, and 273–275. The interval 207–275 is 23 X 3 AA approximate tandem repeats of P-A-A; the sequence is PAAPAAPEAP…APAAPPAPAA (69 aa). Positions 211-251 are enriched in low complexity; that stretch reads AAPEAPAAPAAPAAPAAPAAPAAPAAPEDPAAPAAPEAPAT. Positions 252–280 are enriched in pro residues; it reads PAAPPAPAAAPAPAAPAAPPAPAAPPRPP. The span at 316–331 shows a compositional bias: basic residues; the sequence is SKGGKKSKGKGKSNGR.

It belongs to the oleosin family. As to expression, the full-length protein is found in the tapetal lipid bodies of immature anthers, the proteolytically cleaved C-terminal product is found on the coats of pollen grains. Not found in flowers, developing embryos or leaf tissue.

Its subcellular location is the lipid droplet. It localises to the membrane. Functionally, many of the major pollen coat proteins are derived from endoproteolytic cleavage of oleosin-like proteins. The polypeptide is Oleosin-B6 (Brassica napus (Rape)).